The primary structure comprises 316 residues: tRNA dimethylallyltransferase (316 aa).

Position 17–24 (17–24) interacts with ATP; sequence GPTASGKT. 19 to 24 serves as a coordination point for substrate; sequence TASGKT. 3 interaction with substrate tRNA regions span residues 42 to 45, 166 to 170, and 247 to 252; these read DSAL, QRLSR, and RCVGYR.

This sequence belongs to the IPP transferase family. In terms of assembly, monomer. Mg(2+) is required as a cofactor.

It carries out the reaction adenosine(37) in tRNA + dimethylallyl diphosphate = N(6)-dimethylallyladenosine(37) in tRNA + diphosphate. In terms of biological role, catalyzes the transfer of a dimethylallyl group onto the adenine at position 37 in tRNAs that read codons beginning with uridine, leading to the formation of N6-(dimethylallyl)adenosine (i(6)A). The sequence is that of tRNA dimethylallyltransferase from Salmonella schwarzengrund (strain CVM19633).